The sequence spans 334 residues: Ornithine carbamoyltransferase (334 aa).

Carbamoyl phosphate contacts are provided by residues 57-60 (STRT), Gln84, Arg108, and 135-138 (HPTQ). Residues Asn169, Asp233, and 237-238 (SM) contribute to the L-ornithine site. Carbamoyl phosphate is bound by residues 275–276 (CL) and Arg320.

It belongs to the aspartate/ornithine carbamoyltransferase superfamily. OTCase family.

The protein resides in the cytoplasm. It catalyses the reaction carbamoyl phosphate + L-ornithine = L-citrulline + phosphate + H(+). The protein operates within amino-acid biosynthesis; L-arginine biosynthesis; L-arginine from L-ornithine and carbamoyl phosphate: step 1/3. In terms of biological role, reversibly catalyzes the transfer of the carbamoyl group from carbamoyl phosphate (CP) to the N(epsilon) atom of ornithine (ORN) to produce L-citrulline. In Aliivibrio fischeri (strain ATCC 700601 / ES114) (Vibrio fischeri), this protein is Ornithine carbamoyltransferase.